The sequence spans 345 residues: Methionine import ATP-binding protein MetN (345 aa).

Residues 2-241 (IKLKNISKIF…PKTELAQEFI (240 aa)) enclose the ABC transporter domain. Residue 38–45 (GASGAGKS) participates in ATP binding.

The protein belongs to the ABC transporter superfamily. Methionine importer (TC 3.A.1.24) family. As to quaternary structure, the complex is composed of two ATP-binding proteins (MetN), two transmembrane proteins (MetI) and a solute-binding protein (MetQ).

Its subcellular location is the cell inner membrane. The catalysed reaction is L-methionine(out) + ATP + H2O = L-methionine(in) + ADP + phosphate + H(+). The enzyme catalyses D-methionine(out) + ATP + H2O = D-methionine(in) + ADP + phosphate + H(+). Its function is as follows. Part of the ABC transporter complex MetNIQ involved in methionine import. Responsible for energy coupling to the transport system. The protein is Methionine import ATP-binding protein MetN of Mannheimia succiniciproducens (strain KCTC 0769BP / MBEL55E).